The primary structure comprises 175 residues: uncharacterized protein (175 aa).

This is an uncharacterized protein from Acanthamoeba polyphaga (Amoeba).